The chain runs to 565 residues: Laccase-12 (565 aa).

An N-terminal signal peptide occupies residues 1–24; it reads MTTVHTFSILLFFCSLFSASLIIA. Plastocyanin-like domains are found at residues 32–148 and 158–310; these read VIQE…PTPG and RQTA…YKKT. The N-linked (GlcNAc...) asparagine glycan is linked to Asn78. Residues His82, His84, His127, and His129 each coordinate Cu cation. Asn187, Asn203, Asn298, Asn325, Asn377, Asn387, Asn395, and Asn428 each carry an N-linked (GlcNAc...) asparagine glycan. The 137-residue stretch at 413–549 folds into the Plastocyanin-like 3 domain; sequence DFPSKPPVKF…AMAFLVDNGV (137 aa). Cu cation-binding residues include His466, His469, His471, His528, Cys529, His530, and His534.

This sequence belongs to the multicopper oxidase family. The cofactor is Cu cation. Predominantly expressed in the inflorescence stem.

It is found in the secreted. Its subcellular location is the extracellular space. The protein localises to the apoplast. The enzyme catalyses 4 hydroquinone + O2 = 4 benzosemiquinone + 2 H2O. Its function is as follows. Lignin degradation and detoxification of lignin-derived products. In Arabidopsis thaliana (Mouse-ear cress), this protein is Laccase-12 (LAC12).